The following is a 192-amino-acid chain: Peptidyl-tRNA hydrolase (192 aa).

A tRNA-binding site is contributed by tyrosine 17. Histidine 22 acts as the Proton acceptor in catalysis. Residues phenylalanine 68, asparagine 70, and asparagine 116 each coordinate tRNA.

It belongs to the PTH family. Monomer.

It localises to the cytoplasm. It carries out the reaction an N-acyl-L-alpha-aminoacyl-tRNA + H2O = an N-acyl-L-amino acid + a tRNA + H(+). In terms of biological role, hydrolyzes ribosome-free peptidyl-tRNAs (with 1 or more amino acids incorporated), which drop off the ribosome during protein synthesis, or as a result of ribosome stalling. Catalyzes the release of premature peptidyl moieties from peptidyl-tRNA molecules trapped in stalled 50S ribosomal subunits, and thus maintains levels of free tRNAs and 50S ribosomes. This chain is Peptidyl-tRNA hydrolase, found in Xylella fastidiosa (strain Temecula1 / ATCC 700964).